We begin with the raw amino-acid sequence, 336 residues long: N-acetyl-gamma-glutamyl-phosphate reductase (336 aa).

Cysteine 156 is an active-site residue.

The protein belongs to the NAGSA dehydrogenase family. Type 1 subfamily.

The protein resides in the cytoplasm. It catalyses the reaction N-acetyl-L-glutamate 5-semialdehyde + phosphate + NADP(+) = N-acetyl-L-glutamyl 5-phosphate + NADPH + H(+). Its pathway is amino-acid biosynthesis; L-arginine biosynthesis; N(2)-acetyl-L-ornithine from L-glutamate: step 3/4. In terms of biological role, catalyzes the NADPH-dependent reduction of N-acetyl-5-glutamyl phosphate to yield N-acetyl-L-glutamate 5-semialdehyde. The chain is N-acetyl-gamma-glutamyl-phosphate reductase from Moritella abyssi.